Consider the following 101-residue polypeptide: Small ribosomal subunit protein bS18c (101 aa).

The tract at residues 82–101 (KQFERAESTPRTPGPRTRNK) is disordered.

The protein belongs to the bacterial ribosomal protein bS18 family. Part of the 30S ribosomal subunit.

The protein localises to the plastid. The protein resides in the chloroplast. The chain is Small ribosomal subunit protein bS18c from Platanus occidentalis (Sycamore).